The following is a 53-amino-acid chain: Large ribosomal subunit protein bL32c (53 aa).

The interval 1–21 (MAVPKKRTSKSKKKSRRSHWI) is disordered.

The protein belongs to the bacterial ribosomal protein bL32 family.

It is found in the plastid. The protein localises to the chloroplast. The chain is Large ribosomal subunit protein bL32c (rpl32) from Cyanidium caldarium (Red alga).